A 310-amino-acid polypeptide reads, in one-letter code: Carbamate kinase (310 aa).

This sequence belongs to the carbamate kinase family. In terms of assembly, homodimer.

The protein localises to the cytoplasm. It carries out the reaction hydrogencarbonate + NH4(+) + ATP = carbamoyl phosphate + ADP + H2O + H(+). It functions in the pathway amino-acid degradation; L-arginine degradation via ADI pathway. The sequence is that of Carbamate kinase from Haemophilus influenzae (strain ATCC 51907 / DSM 11121 / KW20 / Rd).